Consider the following 281-residue polypeptide: Spermatogenesis-associated serine-rich protein 1 (281 aa).

Positions 1–14 (MEAARDAQHSDVLE) are enriched in basic and acidic residues. The tract at residues 1-92 (MEAARDAQHS…SSSAQANRSL (92 aa)) is disordered. Positions 21 to 37 (SRTSSHQNRRASLSSDG) are enriched in polar residues. Thr-53 carries the phosphothreonine modification. Positions 54 to 65 (PSDTASGLGQKT) are enriched in polar residues. Residues 66 to 85 (SSTSSSSSSSSSSSPSSSSS) show a composition bias toward low complexity. Phosphoserine is present on residues Ser-71, Ser-74, Ser-77, Ser-78, Ser-79, and Ser-91.

As to expression, detected in pachytene spermatocytes and round spermatids.

This Rattus norvegicus (Rat) protein is Spermatogenesis-associated serine-rich protein 1 (Spats1).